Consider the following 96-residue polypeptide: UPF0235 protein YPK_0828 (96 aa).

The protein belongs to the UPF0235 family.

In Yersinia pseudotuberculosis serotype O:3 (strain YPIII), this protein is UPF0235 protein YPK_0828.